The following is a 358-amino-acid chain: UDP-N-acetylglucosamine--N-acetylmuramyl-(pentapeptide) pyrophosphoryl-undecaprenol N-acetylglucosamine transferase (358 aa).

UDP-N-acetyl-alpha-D-glucosamine-binding positions include 11–13 (TGG), asparagine 120, arginine 161, serine 188, and glutamine 282.

This sequence belongs to the glycosyltransferase 28 family. MurG subfamily.

The protein resides in the cell inner membrane. The catalysed reaction is di-trans,octa-cis-undecaprenyl diphospho-N-acetyl-alpha-D-muramoyl-L-alanyl-D-glutamyl-meso-2,6-diaminopimeloyl-D-alanyl-D-alanine + UDP-N-acetyl-alpha-D-glucosamine = di-trans,octa-cis-undecaprenyl diphospho-[N-acetyl-alpha-D-glucosaminyl-(1-&gt;4)]-N-acetyl-alpha-D-muramoyl-L-alanyl-D-glutamyl-meso-2,6-diaminopimeloyl-D-alanyl-D-alanine + UDP + H(+). It participates in cell wall biogenesis; peptidoglycan biosynthesis. Cell wall formation. Catalyzes the transfer of a GlcNAc subunit on undecaprenyl-pyrophosphoryl-MurNAc-pentapeptide (lipid intermediate I) to form undecaprenyl-pyrophosphoryl-MurNAc-(pentapeptide)GlcNAc (lipid intermediate II). This is UDP-N-acetylglucosamine--N-acetylmuramyl-(pentapeptide) pyrophosphoryl-undecaprenol N-acetylglucosamine transferase from Synechococcus sp. (strain CC9311).